The primary structure comprises 182 residues: Large ribosomal subunit protein eL15 (182 aa).

This sequence belongs to the eukaryotic ribosomal protein eL15 family.

This is Large ribosomal subunit protein eL15 (rpl15e) from Methanothermobacter thermautotrophicus (strain ATCC 29096 / DSM 1053 / JCM 10044 / NBRC 100330 / Delta H) (Methanobacterium thermoautotrophicum).